We begin with the raw amino-acid sequence, 516 residues long: NAD(P)H-quinone oxidoreductase chain 4, chloroplastic (516 aa).

14 helical membrane passes run 4–24 (FPWL…IFLL), 37–57 (LCIC…HFQL), 87–107 (IGPI…AWPV), 111–131 (AQLF…SFSS), 134–154 (LLLF…LLSM), 167–187 (FILY…GIGL), 208–228 (ALEV…LPII), 242–262 (HYST…YGLV), 272–292 (AHCL…IYAA), 305–325 (IAYS…SLSD), 330–350 (GAIL…FLAG), 386–406 (LALP…GIIT), 416–436 (ILIA…SLSM), and 462–482 (LFVS…PDFV).

Belongs to the complex I subunit 4 family.

It localises to the plastid. The protein localises to the chloroplast thylakoid membrane. It catalyses the reaction a plastoquinone + NADH + (n+1) H(+)(in) = a plastoquinol + NAD(+) + n H(+)(out). It carries out the reaction a plastoquinone + NADPH + (n+1) H(+)(in) = a plastoquinol + NADP(+) + n H(+)(out). The chain is NAD(P)H-quinone oxidoreductase chain 4, chloroplastic from Oenothera argillicola (Appalachian evening primrose).